We begin with the raw amino-acid sequence, 347 residues long: MDENKKRALSVALSQIEKQFGKGSVMRMGDRVIEAVEAIPTGSLMLDLALGIGGLPKGRVVEIYGPESSGKTTLTLQAIAQCQKRGGTAAFIDAEHALDPIYAGKLGVNVDDLLLSQPDTGEQALEIADMLVRSGSIDIMVIDSVAALTPRAEIEGEMGDQLPGLQARLMSQALRKLTGNIKRSNTLVIFINQLRMKIGIMMPGQSPETTTGGNALKFYASVRLDIRRIGAIKKGDEIIGNQTKIKVVKNKLAPPFKQVVTEILYGEGISREGELIEMGVEAKLVEKAGAWYSYGGERIGQGKDNARGYLRENPHFAAKLEADLREKFEPTELSREEGDEDTLEDAM.

65-72 (GPESSGKT) is an ATP binding site. Positions 327–336 (KFEPTELSRE) are enriched in basic and acidic residues. Residues 327–347 (KFEPTELSREEGDEDTLEDAM) are disordered. Acidic residues predominate over residues 337-347 (EGDEDTLEDAM).

The protein belongs to the RecA family.

The protein resides in the cytoplasm. Can catalyze the hydrolysis of ATP in the presence of single-stranded DNA, the ATP-dependent uptake of single-stranded DNA by duplex DNA, and the ATP-dependent hybridization of homologous single-stranded DNAs. It interacts with LexA causing its activation and leading to its autocatalytic cleavage. This chain is Protein RecA, found in Xylella fastidiosa (strain M23).